Consider the following 467-residue polypeptide: Cysteine--tRNA ligase (467 aa).

Cys29 contributes to the Zn(2+) binding site. The short motif at 31–41 (PTVYNYIHIGN) is the 'HIGH' region element. Residues Cys209, His234, and Glu238 each coordinate Zn(2+). A 'KMSKS' region motif is present at residues 266 to 270 (KMSKS). Position 269 (Lys269) interacts with ATP. At Ser270 the chain carries Phosphoserine.

The protein belongs to the class-I aminoacyl-tRNA synthetase family. In terms of assembly, monomer. Zn(2+) is required as a cofactor.

It localises to the cytoplasm. It catalyses the reaction tRNA(Cys) + L-cysteine + ATP = L-cysteinyl-tRNA(Cys) + AMP + diphosphate. The polypeptide is Cysteine--tRNA ligase (Bacillus licheniformis (strain ATCC 14580 / DSM 13 / JCM 2505 / CCUG 7422 / NBRC 12200 / NCIMB 9375 / NCTC 10341 / NRRL NRS-1264 / Gibson 46)).